Consider the following 327-residue polypeptide: MIDDIKNVSVVIPVYNEEESLPVLIERTLAACRQIGKPWEIILVDDGSSDRSAELLTEAASDPEKHIIAVLLNRNYGQHSAIMAGFQQAVGDVVITLDADLQNPPEEIPRLVEYAAQGYDVVGTVRANRQDSLFRKLASKTINMMIRRSTGKSMADYGCMLRAYRRHIVSAMLHCHERSTFIPILANTFARKTIEIDVMHAEREFGTSKYSFLKLINLMYDLLTCLTTTPLRILSLIGSVVALSGFLLALLLIGLRLFLGAEWAAEGVFTLFAVLFMFIGAQFVGMGLLGEYIGRIYTDVRARPRYFVQKTVSAATPLTTSLRDEEE.

A run of 2 helical transmembrane segments spans residues 233–253 (ILSLIGSVVALSGFLLALLLI) and 268–288 (VFTLFAVLFMFIGAQFVGMGL).

The protein belongs to the glycosyltransferase 2 family.

It is found in the cell inner membrane. It carries out the reaction UDP-4-deoxy-4-formamido-beta-L-arabinose + di-trans,octa-cis-undecaprenyl phosphate = 4-deoxy-4-formamido-alpha-L-arabinopyranosyl di-trans,octa-cis-undecaprenyl phosphate + UDP. It participates in glycolipid biosynthesis; 4-amino-4-deoxy-alpha-L-arabinose undecaprenyl phosphate biosynthesis; 4-amino-4-deoxy-alpha-L-arabinose undecaprenyl phosphate from UDP-4-deoxy-4-formamido-beta-L-arabinose and undecaprenyl phosphate: step 1/2. Its pathway is bacterial outer membrane biogenesis; lipopolysaccharide biosynthesis. Functionally, catalyzes the transfer of 4-deoxy-4-formamido-L-arabinose from UDP to undecaprenyl phosphate. The modified arabinose is attached to lipid A and is required for resistance to polymyxin and cationic antimicrobial peptides. The polypeptide is Undecaprenyl-phosphate 4-deoxy-4-formamido-L-arabinose transferase (Pectobacterium carotovorum subsp. carotovorum (strain PC1)).